Consider the following 73-residue polypeptide: UPF0150 protein ssl0259 (73 aa).

The protein belongs to the UPF0150 family.

The protein is UPF0150 protein ssl0259 of Synechocystis sp. (strain ATCC 27184 / PCC 6803 / Kazusa).